Reading from the N-terminus, the 101-residue chain is MAKICMIEREQKRRDTVKKYAAKRAELLAVINDANASAEDRRAARQKLQSLPRNSSPVRQRNRCALTGRPRGVFSKFGIARSKLRELMMRGEVPGVTKASW.

The tract at residues 36 to 61 is disordered; that stretch reads ASAEDRRAARQKLQSLPRNSSPVRQR. Residues 47–59 are compositionally biased toward polar residues; sequence KLQSLPRNSSPVR.

The protein belongs to the universal ribosomal protein uS14 family. In terms of assembly, part of the 30S ribosomal subunit. Contacts proteins S3 and S10.

Binds 16S rRNA, required for the assembly of 30S particles and may also be responsible for determining the conformation of the 16S rRNA at the A site. This is Small ribosomal subunit protein uS14 from Methylobacillus flagellatus (strain ATCC 51484 / DSM 6875 / VKM B-1610 / KT).